A 277-amino-acid polypeptide reads, in one-letter code: Large ribosomal subunit protein uL2c (277 aa).

Positions 1 to 11 are enriched in polar residues; it reads MNTRSYSTFTP. Disordered stretches follow at residues 1–47 and 254–277; these read MNTR…RNNS and YSAL…RRRK.

It belongs to the universal ribosomal protein uL2 family. Part of the 50S ribosomal subunit.

It localises to the plastid. Its subcellular location is the chloroplast. This chain is Large ribosomal subunit protein uL2c (rpl2), found in Cryptomeria japonica (Japanese cedar).